We begin with the raw amino-acid sequence, 430 residues long: Bifunctional protein GlmU (430 aa).

The pyrophosphorylase stretch occupies residues 1-223; sequence MSFSVVILAA…KNEFQGVNSK (223 aa). Residues 8–11, K22, and 81–82 each bind UDP-N-acetyl-alpha-D-glucosamine; these read LAAG and GT. D102 provides a ligand contact to Mg(2+). 4 residues coordinate UDP-N-acetyl-alpha-D-glucosamine: G135, E149, N164, and N221. N221 lines the Mg(2+) pocket. The tract at residues 224–244 is linker; sequence YDLANAEIVMQDRIKRHWMQQ. The N-acetyltransferase stretch occupies residues 245–430; the sequence is GVIMRLPQTI…DFYYKFFGKN (186 aa). 2 residues coordinate UDP-N-acetyl-alpha-D-glucosamine: R308 and K325. H336 acts as the Proton acceptor in catalysis. UDP-N-acetyl-alpha-D-glucosamine is bound by residues Y339 and N350. Residues A353, 359 to 360, S378, A396, and R413 each bind acetyl-CoA; that span reads NY.

This sequence in the N-terminal section; belongs to the N-acetylglucosamine-1-phosphate uridyltransferase family. The protein in the C-terminal section; belongs to the transferase hexapeptide repeat family. In terms of assembly, homotrimer. Mg(2+) is required as a cofactor.

Its subcellular location is the cytoplasm. The enzyme catalyses alpha-D-glucosamine 1-phosphate + acetyl-CoA = N-acetyl-alpha-D-glucosamine 1-phosphate + CoA + H(+). It carries out the reaction N-acetyl-alpha-D-glucosamine 1-phosphate + UTP + H(+) = UDP-N-acetyl-alpha-D-glucosamine + diphosphate. It participates in nucleotide-sugar biosynthesis; UDP-N-acetyl-alpha-D-glucosamine biosynthesis; N-acetyl-alpha-D-glucosamine 1-phosphate from alpha-D-glucosamine 6-phosphate (route II): step 2/2. The protein operates within nucleotide-sugar biosynthesis; UDP-N-acetyl-alpha-D-glucosamine biosynthesis; UDP-N-acetyl-alpha-D-glucosamine from N-acetyl-alpha-D-glucosamine 1-phosphate: step 1/1. Its pathway is bacterial outer membrane biogenesis; LPS lipid A biosynthesis. Functionally, catalyzes the last two sequential reactions in the de novo biosynthetic pathway for UDP-N-acetylglucosamine (UDP-GlcNAc). The C-terminal domain catalyzes the transfer of acetyl group from acetyl coenzyme A to glucosamine-1-phosphate (GlcN-1-P) to produce N-acetylglucosamine-1-phosphate (GlcNAc-1-P), which is converted into UDP-GlcNAc by the transfer of uridine 5-monophosphate (from uridine 5-triphosphate), a reaction catalyzed by the N-terminal domain. The polypeptide is Bifunctional protein GlmU (Nitratiruptor sp. (strain SB155-2)).